Consider the following 199-residue polypeptide: Thymidine kinase (199 aa).

ATP contacts are provided by residues 15–22 (GSMFSGKS) and 88–91 (DEVQ). Glu89 (proton acceptor) is an active-site residue. Residues Cys145, Cys148, Cys183, and His186 each coordinate Zn(2+).

The protein belongs to the thymidine kinase family. In terms of assembly, homotetramer.

Its subcellular location is the cytoplasm. It carries out the reaction thymidine + ATP = dTMP + ADP + H(+). The protein is Thymidine kinase of Staphylococcus saprophyticus subsp. saprophyticus (strain ATCC 15305 / DSM 20229 / NCIMB 8711 / NCTC 7292 / S-41).